Consider the following 355-residue polypeptide: Membrane cofactor protein (355 aa).

A signal peptide spans 1 to 42 (MTAAPLTPDPTHPRRRRKSYTFFSLGIYAEALLFLLSSLSDA). Sushi domains follow at residues 43–104 (CEPP…GCIK), 105–168 (VQCT…SCKK), 169–234 (VYCL…ECKV), and 235–294 (VKCP…QCLK). Residues 43 to 326 (CEPPPPFEAM…GIFGQEFDAW (284 aa)) lie on the Extracellular side of the membrane. 6 disulfides stabilise this stretch: Cys107–Cys149, Cys135–Cys166, Cys171–Cys219, Cys200–Cys232, Cys237–Cys279, and Cys265–Cys292. N-linked (GlcNAc...) asparagine glycosylation is present at Asn179. A glycan (O-linked (GalNAc...) threonine) is linked at Thr301. Residues 327-347 (IIALIVVTSVVGVIVICLIIL) form a helical membrane-spanning segment. Residues 348–355 (RCSEYRKK) lie on the Cytoplasmic side of the membrane.

Interacts with C3b. Interacts with C4b. Interacts with moesin/MSN. In terms of processing, O-glycosylated. N-glycosylated. In terms of tissue distribution, specifically expressed in testis. Within testis, present only in elongated spermatids and spermatozoa (at protein level).

The protein localises to the cytoplasmic vesicle. The protein resides in the secretory vesicle. It is found in the acrosome inner membrane. In terms of biological role, may be involved in the fusion of the spermatozoa with the oocyte during fertilization. The polypeptide is Membrane cofactor protein (Cd46) (Rattus norvegicus (Rat)).